The following is a 282-amino-acid chain: Energy-coupling factor transporter ATP-binding protein EcfA2 (282 aa).

An ABC transporter domain is found at 1-234; it reads MKGSPFEKVA…ADELVALGLD (234 aa). 28–35 lines the ATP pocket; sequence GHTGSGKS.

This sequence belongs to the ABC transporter superfamily. Energy-coupling factor EcfA family. As to quaternary structure, forms a stable energy-coupling factor (ECF) transporter complex composed of 2 membrane-embedded substrate-binding proteins (S component), 2 ATP-binding proteins (A component) and 2 transmembrane proteins (T component).

The protein resides in the cell membrane. Its function is as follows. ATP-binding (A) component of a common energy-coupling factor (ECF) ABC-transporter complex. Unlike classic ABC transporters this ECF transporter provides the energy necessary to transport a number of different substrates. The sequence is that of Energy-coupling factor transporter ATP-binding protein EcfA2 from Halalkalibacterium halodurans (strain ATCC BAA-125 / DSM 18197 / FERM 7344 / JCM 9153 / C-125) (Bacillus halodurans).